Reading from the N-terminus, the 138-residue chain is DNA-directed RNA polymerase subunit omega (138 aa).

The interval 101-138 (AEDDDTLEADGLTIHDGADSDLDLSDDAGQDTDEADED) is disordered. Acidic residues predominate over residues 119–138 (DSDLDLSDDAGQDTDEADED).

This sequence belongs to the RNA polymerase subunit omega family. In terms of assembly, the RNAP catalytic core consists of 2 alpha, 1 beta, 1 beta' and 1 omega subunit. When a sigma factor is associated with the core the holoenzyme is formed, which can initiate transcription.

It catalyses the reaction RNA(n) + a ribonucleoside 5'-triphosphate = RNA(n+1) + diphosphate. Promotes RNA polymerase assembly. Latches the N- and C-terminal regions of the beta' subunit thereby facilitating its interaction with the beta and alpha subunits. The polypeptide is DNA-directed RNA polymerase subunit omega (Rhodospirillum rubrum (strain ATCC 11170 / ATH 1.1.1 / DSM 467 / LMG 4362 / NCIMB 8255 / S1)).